Here is a 471-residue protein sequence, read N- to C-terminus: Probable ribonuclease FAU-1 (471 aa).

Belongs to the FAU-1 family.

Its function is as follows. Probable RNase involved in rRNA stability through maturation and/or degradation of precursor rRNAs. Binds to RNA in loop regions with AU-rich sequences. The protein is Probable ribonuclease FAU-1 of Aeropyrum pernix (strain ATCC 700893 / DSM 11879 / JCM 9820 / NBRC 100138 / K1).